Here is a 525-residue protein sequence, read N- to C-terminus: Signal recognition particle protein (525 aa).

GTP is bound by residues 107 to 114 (GLQGSGKT), 196 to 200 (DTAGR), and 254 to 257 (TKLD). Residues 437–525 (GMGIPGIGRK…LSKLKFPGKK (89 aa)) form a disordered region. Basic residues predominate over residues 447–467 (SATRKSKGAKGKSGKKSKKGT). The segment covering 480–497 (GVPGMPGLAGLPGGLPDL) has biased composition (low complexity).

Belongs to the GTP-binding SRP family. SRP54 subfamily. In terms of assembly, part of the signal recognition particle protein translocation system, which is composed of SRP and FtsY.

It localises to the cytoplasm. The enzyme catalyses GTP + H2O = GDP + phosphate + H(+). In terms of biological role, involved in targeting and insertion of nascent membrane proteins into the cytoplasmic membrane. Binds to the hydrophobic signal sequence of the ribosome-nascent chain (RNC) as it emerges from the ribosomes. The SRP-RNC complex is then targeted to the cytoplasmic membrane where it interacts with the SRP receptor FtsY. The polypeptide is Signal recognition particle protein (Mycobacterium bovis (strain ATCC BAA-935 / AF2122/97)).